We begin with the raw amino-acid sequence, 394 residues long: NAD(P)H-quinone oxidoreductase subunit H (394 aa).

Belongs to the complex I 49 kDa subunit family. As to quaternary structure, NDH-1 can be composed of about 15 different subunits; different subcomplexes with different compositions have been identified which probably have different functions.

It is found in the cellular thylakoid membrane. The enzyme catalyses a plastoquinone + NADH + (n+1) H(+)(in) = a plastoquinol + NAD(+) + n H(+)(out). It catalyses the reaction a plastoquinone + NADPH + (n+1) H(+)(in) = a plastoquinol + NADP(+) + n H(+)(out). Its function is as follows. NDH-1 shuttles electrons from an unknown electron donor, via FMN and iron-sulfur (Fe-S) centers, to quinones in the respiratory and/or the photosynthetic chain. The immediate electron acceptor for the enzyme in this species is believed to be plastoquinone. Couples the redox reaction to proton translocation, and thus conserves the redox energy in a proton gradient. Cyanobacterial NDH-1 also plays a role in inorganic carbon-concentration. The protein is NAD(P)H-quinone oxidoreductase subunit H of Prochlorococcus marinus (strain MIT 9313).